Reading from the N-terminus, the 297-residue chain is 4-hydroxy-tetrahydrodipicolinate synthase (297 aa).

T49 provides a ligand contact to pyruvate. Y137 acts as the Proton donor/acceptor in catalysis. The Schiff-base intermediate with substrate role is filled by K166. Position 208 (I208) interacts with pyruvate.

The protein belongs to the DapA family. Homotetramer; dimer of dimers.

The protein localises to the cytoplasm. The catalysed reaction is L-aspartate 4-semialdehyde + pyruvate = (2S,4S)-4-hydroxy-2,3,4,5-tetrahydrodipicolinate + H2O + H(+). The protein operates within amino-acid biosynthesis; L-lysine biosynthesis via DAP pathway; (S)-tetrahydrodipicolinate from L-aspartate: step 3/4. In terms of biological role, catalyzes the condensation of (S)-aspartate-beta-semialdehyde [(S)-ASA] and pyruvate to 4-hydroxy-tetrahydrodipicolinate (HTPA). The polypeptide is 4-hydroxy-tetrahydrodipicolinate synthase (Prosthecochloris aestuarii (strain DSM 271 / SK 413)).